The primary structure comprises 164 residues: Choriogonadotropin subunit beta (164 aa).

Positions 1-20 (MEMLQGLLLCLLLSTGGAWA) are cleaved as a signal peptide. 6 cysteine pairs are disulfide-bonded: Cys-29–Cys-77, Cys-43–Cys-92, Cys-46–Cys-130, Cys-54–Cys-108, Cys-58–Cys-110, and Cys-113–Cys-120. N-linked (GlcNAc...) asparagine glycosylation is present at Asn-50. The segment at 133–164 (HTSQDSSSKDPPRNLTSPSQLPEPADAPLVPQ) is disordered. O-linked (GalNAc...) serine glycosylation is present at Ser-140. Asn-146 carries an N-linked (GlcNAc...) asparagine glycan. Residue Ser-151 is glycosylated (O-linked (GalNAc...) serine).

Belongs to the glycoprotein hormones subunit beta family. Heterodimer of a common alpha chain and a unique beta chain which confers biological specificity to thyrotropin, lutropin, follitropin and gonadotropin.

Its subcellular location is the secreted. In terms of biological role, stimulates the ovaries to synthesize the steroids that are essential for the maintenance of pregnancy. The protein is Choriogonadotropin subunit beta (CGB) of Aotus nancymaae (Ma's night monkey).